A 265-amino-acid polypeptide reads, in one-letter code: U6 snRNA phosphodiesterase 1 (265 aa).

The tract at residues 1-72 (MSAAPLVGYS…DSTKHGGRVR (72 aa)) is disordered. Positions 20-31 (DGMRTRPGDGSH) are enriched in basic and acidic residues. His-120 serves as the catalytic Proton acceptor. 120–122 (HLS) lines the AMP pocket. UMP contacts are provided by residues Gln-164, Tyr-202, and 206 to 210 (SFHLS). AMP is bound by residues Tyr-202 and 204-210 (DPSFHLS). His-208 acts as the Proton donor in catalysis.

Belongs to the 2H phosphoesterase superfamily. USB1 family. In terms of assembly, interacts with PLRG1, CDC5L and PRPF19.

It localises to the nucleus. The catalysed reaction is a 3'-end uridylyl-uridine-RNA = a 3'-end 2',3'-cyclophospho-uridine-RNA + uridine. It catalyses the reaction a 3'-end uridylyl-adenosine-RNA = a 3'-end 2',3'-cyclophospho-uridine-RNA + adenosine. Its activity is regulated as follows. 3'-5' RNA exonuclease activity is inhibited by a 3' phosphate terminated RNA. 3'-5' RNA exonuclease that trims the 3' end of oligo(U) and oligo(A) tracts of the pre-U6 small nuclear RNA (snRNA) molecule, leading to the formation of a mature U6 snRNA 3' end-terminated with a 2',3'-cyclic phosphate. Participates in the U6 snRNA 3' end processing that prevents U6 snRNA degradation. In addition also removes uridines from the 3' end of U6atac snRNA and possibly the vault RNA VTRNA1-1. The polypeptide is U6 snRNA phosphodiesterase 1 (Homo sapiens (Human)).